A 226-amino-acid chain; its full sequence is Lysoplasmalogenase TMEM86B (226 aa).

The Cytoplasmic portion of the chain corresponds to 1–23 (MDAGKAGQTLKTHCSAQRPDVCR). A helical membrane pass occupies residues 24–40 (WLSPFILSCCVYFCLWI). The Extracellular segment spans residues 41–46 (PEDQLS). Residues 47–67 (WFAALVKCLPVLCLAGFLWVM) form a helical membrane-spanning segment. Over 68-75 (SPSGGYTQ) the chain is Cytoplasmic. A helical membrane pass occupies residues 76 to 93 (LLQGALVCSAVGDACLIW). Residues 94–100 (PAAFVPG) are Extracellular-facing. A helical membrane pass occupies residues 101-117 (MAAFATAHLLYVWAFGF). Topologically, residues 118–123 (SPLQPG) are cytoplasmic. Residues 124–140 (LLLLIILAPGPYLSLVL) traverse the membrane as a helical segment. Residues 141-146 (QHLEPD) are Extracellular-facing. The helical transmembrane segment at 147–163 (MVLPVAAYGLILMAMLW) threads the bilayer. The Cytoplasmic segment spans residues 164-171 (RGLAQGGS). A helical transmembrane segment spans residues 172–188 (AGWGALLFTLSDGVLAW). Residues 189–199 (DTFAQPLPHAH) lie on the Extracellular side of the membrane. The chain crosses the membrane as a helical span at residues 200–218 (LVIMTTYYAAQLLITLSAL). Residues 219 to 226 (RSPVPKTD) are Cytoplasmic-facing.

The protein belongs to the TMEM86 family. As to quaternary structure, homodimer.

It localises to the endoplasmic reticulum membrane. Its subcellular location is the cytoplasm. The enzyme catalyses a 1-O-(1Z-alkenyl)-sn-glycero-3-phosphocholine + H2O = a 2,3-saturated aldehyde + sn-glycerol 3-phosphocholine. The catalysed reaction is a 1-O-(1Z-alkenyl)-sn-glycero-3-phosphoethanolamine + H2O = a 2,3-saturated aldehyde + sn-glycero-3-phosphoethanolamine. Competitively inhibited by lysophosphatidic acid. Catalyzes the hydrolysis of the vinyl ether bond of choline or ethanolamine lysoplasmalogens, forming fatty aldehyde and glycerophosphocholine or glycerophosphoethanolamine, respectively and is specific for the sn-2-deacylated (lyso) form of plasmalogen. The polypeptide is Lysoplasmalogenase TMEM86B (TMEM86B) (Homo sapiens (Human)).